A 310-amino-acid chain; its full sequence is Homoserine kinase (310 aa).

91-101 provides a ligand contact to ATP; it reads PIGSGLGSSAC.

This sequence belongs to the GHMP kinase family. Homoserine kinase subfamily.

Its subcellular location is the cytoplasm. It catalyses the reaction L-homoserine + ATP = O-phospho-L-homoserine + ADP + H(+). Its pathway is amino-acid biosynthesis; L-threonine biosynthesis; L-threonine from L-aspartate: step 4/5. Its function is as follows. Catalyzes the ATP-dependent phosphorylation of L-homoserine to L-homoserine phosphate. This is Homoserine kinase from Sodalis glossinidius (strain morsitans).